Consider the following 246-residue polypeptide: Putative carboxymethylenebutenolidase (246 aa).

Active-site residues include Cys-127, Asp-183, and His-215.

The protein belongs to the dienelactone hydrolase family.

It carries out the reaction 2-(5-oxo-2,5-dihydrofuran-2-ylidene)acetate + H2O = 4-oxohex-2-enedioate + H(+). The sequence is that of Putative carboxymethylenebutenolidase from Synechocystis sp. (strain ATCC 27184 / PCC 6803 / Kazusa).